The primary structure comprises 353 residues: Guanine nucleotide-binding protein subunit alpha (353 aa).

Residues 1 to 26 (MGCGMSVEEKEGKARNEEIENQLKRD) form a disordered region. Gly-2 carries the N-myristoyl glycine lipid modification. Residue Cys-3 is the site of S-palmitoyl cysteine attachment. Basic and acidic residues predominate over residues 7–26 (VEEKEGKARNEEIENQLKRD). In terms of domain architecture, G-alpha spans 32 to 353 (NEIKMLLLGA…QENLRLCGLI (322 aa)). The tract at residues 35–48 (KMLLLGAGESGKST) is G1 motif. GTP is bound by residues Glu-43, Ser-44, Gly-45, Lys-46, Ser-47, Thr-48, Asp-150, Leu-175, Thr-181, Gly-203, Asn-269, Lys-270, Asp-272, and Ala-325. Ser-47 lines the Mg(2+) pocket. The tract at residues 173-181 (DVLRSRVKT) is G2 motif. Thr-181 provides a ligand contact to Mg(2+). The tract at residues 196–205 (YRMFDVGGQR) is G3 motif. The interval 265–272 (ILFLNKID) is G4 motif. The interval 323-328 (TCATDT) is G5 motif.

This sequence belongs to the G-alpha family. G(q) subfamily. G proteins are composed of 3 units; alpha, beta and gamma. The alpha chain contains the guanine nucleotide binding site. Requires Mg(2+) as cofactor.

Guanine nucleotide-binding proteins (G proteins) are involved as modulators or transducers in various transmembrane signaling systems. The polypeptide is Guanine nucleotide-binding protein subunit alpha (SSG-1) (Sporothrix schenckii (strain ATCC 58251 / de Perez 2211183) (Rose-picker's disease fungus)).